The primary structure comprises 135 residues: Translation initiation factor 2 subunit beta (135 aa).

It belongs to the eIF-2-beta/eIF-5 family. As to quaternary structure, heterotrimer composed of an alpha, a beta and a gamma chain.

EIF-2 functions in the early steps of protein synthesis by forming a ternary complex with GTP and initiator tRNA. The protein is Translation initiation factor 2 subunit beta of Methanobrevibacter smithii (strain ATCC 35061 / DSM 861 / OCM 144 / PS).